The sequence spans 251 residues: Gamma-glutamyl peptidase 4 (251 aa).

One can recognise a Glutamine amidotransferase type-1 domain in the interval 16 to 213 (SEFAKKTYGG…IDRVLAGGHI (198 aa)). The active-site Nucleophile is cysteine 100. Residues histidine 192 and glutamate 194 contribute to the active site.

It belongs to the peptidase C26 family.

The protein resides in the cytoplasm. It is found in the cytosol. Its pathway is secondary metabolite biosynthesis. In terms of biological role, involved in glucosinolate biosynthesis. Hydrolyzes the gamma-glutamyl peptide bond of several glutathione (GSH) conjugates to produce Cys-Gly conjugates related to glucosinolates. The gamma-Glu-Cys-Gly-GSH conjugates are the sulfur-donating molecule in glucosinolate biosynthesis. This chain is Gamma-glutamyl peptidase 4, found in Arabidopsis thaliana (Mouse-ear cress).